The chain runs to 760 residues: MOXD1 homolog 2 (760 aa).

Residues 1 to 34 (MAHPRKAVATPATLQLGPPAQTAQSPAATLRHSR) are disordered. Positions 18-34 (PPAQTAQSPAATLRHSR) are enriched in low complexity. A helical membrane pass occupies residues 47–67 (CFISCHTFNLFLLLLLLASGV). 3 N-linked (GlcNAc...) asparagine glycosylation sites follow: Asn-78, Asn-198, and Asn-223. Residues 117-233 (DDFRILWQII…DTMRLLYMYH (117 aa)) form the DOMON domain. 3 disulfide bridges follow: Cys-339–Cys-367, Cys-467–Cys-581, and Cys-543–Cys-565. N-linked (GlcNAc...) asparagine glycosylation occurs at Asn-668. The segment at 678–701 (RCKPKRPLAPPTERTAPPPASDLS) is disordered. The chain crosses the membrane as a helical span at residues 740–760 (FISCLLWLGASSWWLLLMLRT).

This sequence belongs to the copper type II ascorbate-dependent monooxygenase family.

It localises to the membrane. The chain is MOXD1 homolog 2 (olf413) from Drosophila melanogaster (Fruit fly).